We begin with the raw amino-acid sequence, 275 residues long: Elongation factor Ts (275 aa).

Residue K36 forms an Isoglutamyl lysine isopeptide (Lys-Gln) (interchain with Q-Cter in protein Pup) linkage. Residues 76-79 (TDFV) form an involved in Mg(2+) ion dislocation from EF-Tu region.

Belongs to the EF-Ts family.

The protein resides in the cytoplasm. Functionally, associates with the EF-Tu.GDP complex and induces the exchange of GDP to GTP. It remains bound to the aminoacyl-tRNA.EF-Tu.GTP complex up to the GTP hydrolysis stage on the ribosome. In Mycolicibacterium smegmatis (strain ATCC 700084 / mc(2)155) (Mycobacterium smegmatis), this protein is Elongation factor Ts.